A 470-amino-acid chain; its full sequence is Tert-butanol monooxygenase / tert-amyl alcohol desaturase oxygenase subunit (470 aa).

The 105-residue stretch at 51–155 (WQPVCLSQEL…AFERNGLVFA (105 aa)) folds into the Rieske domain. [2Fe-2S] cluster is bound by residues cysteine 91, histidine 93, cysteine 110, and histidine 113.

It belongs to the bacterial ring-hydroxylating dioxygenase alpha subunit family. As to quaternary structure, this two-component enzyme is composed of an oxygenase (MdpJ) and a reductase (MdpK). [2Fe-2S] cluster is required as a cofactor.

The catalysed reaction is tert-butanol + NADPH + O2 + H(+) = 2-methylpropane-1,2-diol + NADP(+) + H2O. It catalyses the reaction 2-methylbutan-2-ol + NADPH + O2 + H(+) = 3-hydroxy-3-methylbut-1-ene + NADP(+) + 2 H2O. In terms of biological role, oxygenase component of a two-component system involved in the degradation of tertiary alcohols such as tert-butyl alcohol (TBA) and tert-amyl alcohol (TAA). In the presence of TBA, catalyzes the hydroxylation of TBA to 2-methylpropane-1,2-diol. In the presence of TAA, functions as a desaturase, enabling the degradation of TAA and resulting in the formation of the hemiterpene 3-hydroxy-3-methylbut-1-ene. The specificity of the catalysis depends strongly on the molecule structure of the substrate, allowing either hydroxylation or desaturation reactions. Also catalyzes the desaturation of the tertiary alcohol 3-methyl-3-pentanol (a C6 homolog of TBA and TAA) to 3-methyl-1-penten-3-ol, with lower efficiency. In addition, can transform some secondary alcohols, including the hydroxylation of 2-propanol to 1,2-propanediol, and the desaturation of 2-butanol, 3-methyl-2-butanol and 3-pentanol. In Aquincola tertiaricarbonis, this protein is Tert-butanol monooxygenase / tert-amyl alcohol desaturase oxygenase subunit.